The primary structure comprises 594 residues: Suppressor of hairless protein (594 aa).

Residues 20–87 (ETTVVNPNGS…QQQQQHQQQM (68 aa)) are disordered. The span at 58 to 87 (QQQQQQLQVHHQQQQQQQQQQQQQQHQQQM) shows a compositional bias: low complexity. DNA-binding stretches follow at residues 131–141 (QKSYGNEKRFF), 239–244 (SKPSKK), and 266–271 (RLRSQT). The region spanning 429–519 (PIVNSLNLNG…YATGLTFTYT (91 aa)) is the IPT/TIG domain. 2 stretches are compositionally biased toward low complexity: residues 542-562 (NNNN…AGSP) and 569-580 (QQQQQQHQALPS). The interval 542–594 (NNNNNITSISNNNNSNNAGSPAAGGGLQQQQQQHQALPSISEVQWNSHGSGLS) is disordered. Positions 582–594 (SEVQWNSHGSGLS) are enriched in polar residues.

It belongs to the Su(H) family. As to quaternary structure, interacts with activated cleaved Notch. Interacts with Hairless, this interaction preventing its DNA-binding activity. Interacts with insv (via BEN domain).

It localises to the nucleus. The protein localises to the cytoplasm. Its function is as follows. Transcriptional regulator that plays a central role in Notch signaling, a signaling pathway involved in cell-cell communication that regulates a broad spectrum of cell-fate determinations. Binds directly the 5'-GTGRGAR-3' DNA consensus sequence, which is present in the regulatory region of several genes. Acts as a transcriptional repressor when it is not associated with Notch proteins. When associated with some Notch protein, it acts as a transcriptional activator that activates transcription of Notch target genes. Required for transcription of Sim. Specifically binds to the immunoglobulin kappa-type J segment recombination signal sequence. Required for neurogenesis in imaginal disks. In the larval brain, might play a role as a transducer of Notch signaling during type II neuroblast development. Also functions independently of the Notch pathway, in the development of the bristle sensory organ precursor cell. This chain is Suppressor of hairless protein (Su(H)), found in Drosophila melanogaster (Fruit fly).